Here is a 236-residue protein sequence, read N- to C-terminus: 2,3,4,5-tetrahydropyridine-2,6-dicarboxylate N-acetyltransferase (236 aa).

It belongs to the transferase hexapeptide repeat family. DapH subfamily.

It catalyses the reaction (S)-2,3,4,5-tetrahydrodipicolinate + acetyl-CoA + H2O = L-2-acetamido-6-oxoheptanedioate + CoA. It participates in amino-acid biosynthesis; L-lysine biosynthesis via DAP pathway; LL-2,6-diaminopimelate from (S)-tetrahydrodipicolinate (acetylase route): step 1/3. Functionally, catalyzes the transfer of an acetyl group from acetyl-CoA to tetrahydrodipicolinate. The sequence is that of 2,3,4,5-tetrahydropyridine-2,6-dicarboxylate N-acetyltransferase from Clostridium beijerinckii (strain ATCC 51743 / NCIMB 8052) (Clostridium acetobutylicum).